The following is a 414-amino-acid chain: Arginine deiminase (414 aa).

Cys-402 acts as the Amidino-cysteine intermediate in catalysis.

Belongs to the arginine deiminase family.

The protein resides in the cytoplasm. It catalyses the reaction L-arginine + H2O = L-citrulline + NH4(+). Its pathway is amino-acid degradation; L-arginine degradation via ADI pathway; carbamoyl phosphate from L-arginine: step 1/2. The chain is Arginine deiminase from Oenococcus oeni (strain ATCC BAA-331 / PSU-1).